Reading from the N-terminus, the 673-residue chain is Annexin A6 (673 aa).

Ala2 carries the post-translational modification N-acetylalanine. Ser13 carries the post-translational modification Phosphoserine. Annexin repeat units follow at residues 20–91 (FDPN…GLMR), 92–163 (PPAY…VLLQ), 175–247 (DLVQ…AVVK), 251–322 (STPE…KLSG), 363–434 (FNPD…GLMM), 435–506 (PPAH…SLAT), 521–595 (EDAQ…AIVQ), and 599–670 (NKPL…ALCG). Tyr30 is subject to Phosphotyrosine. Lys63, Lys68, Lys75, and Lys81 each carry N6-acetyllysine. Tyr201 carries the post-translational modification Phosphotyrosine. Lys306, Lys370, and Lys418 each carry N6-acetyllysine. Ser422 is modified (phosphoserine). Position 483 is an N6-acetyllysine (Lys483). Ser537 is subject to Phosphoserine. An N6-acetyllysine modification is found at Lys620.

This sequence belongs to the annexin family. Post-translationally, phosphorylated in response to growth factor stimulation.

It localises to the cytoplasm. The protein resides in the melanosome. In terms of biological role, may associate with CD21. May regulate the release of Ca(2+) from intracellular stores. In Homo sapiens (Human), this protein is Annexin A6 (ANXA6).